Here is a 553-residue protein sequence, read N- to C-terminus: Glucose-6-phosphate isomerase (553 aa).

Glutamate 357 functions as the Proton donor in the catalytic mechanism. Catalysis depends on residues histidine 388 and lysine 514. A disordered region spans residues 524–553 (ITGAGSPPPQSDSSTDGLVRRYRTERGRAG). Basic and acidic residues predominate over residues 541–553 (LVRRYRTERGRAG).

This sequence belongs to the GPI family.

It localises to the cytoplasm. It catalyses the reaction alpha-D-glucose 6-phosphate = beta-D-fructose 6-phosphate. It participates in carbohydrate biosynthesis; gluconeogenesis. Its pathway is carbohydrate degradation; glycolysis; D-glyceraldehyde 3-phosphate and glycerone phosphate from D-glucose: step 2/4. Functionally, catalyzes the reversible isomerization of glucose-6-phosphate to fructose-6-phosphate. This Mycobacterium bovis (strain BCG / Tokyo 172 / ATCC 35737 / TMC 1019) protein is Glucose-6-phosphate isomerase.